The following is a 509-amino-acid chain: ATP synthase subunit alpha (509 aa).

169-176 (GDRKTGKT) contributes to the ATP binding site.

Belongs to the ATPase alpha/beta chains family. F-type ATPases have 2 components, CF(1) - the catalytic core - and CF(0) - the membrane proton channel. CF(1) has five subunits: alpha(3), beta(3), gamma(1), delta(1), epsilon(1). CF(0) has three main subunits: a(1), b(2) and c(9-12). The alpha and beta chains form an alternating ring which encloses part of the gamma chain. CF(1) is attached to CF(0) by a central stalk formed by the gamma and epsilon chains, while a peripheral stalk is formed by the delta and b chains.

The protein resides in the cell membrane. The catalysed reaction is ATP + H2O + 4 H(+)(in) = ADP + phosphate + 5 H(+)(out). Its function is as follows. Produces ATP from ADP in the presence of a proton gradient across the membrane. The alpha chain is a regulatory subunit. The sequence is that of ATP synthase subunit alpha from Lacticaseibacillus casei (strain BL23) (Lactobacillus casei).